We begin with the raw amino-acid sequence, 450 residues long: Coiled-coil domain-containing protein 149-A (450 aa).

Coiled-coil stretches lie at residues 1–197 (MANQ…DRRK) and 259–286 (IQHQ…LEIS). The disordered stretch occupies residues 290 to 358 (SLPDDRTGRG…NGQVGTQLKE (69 aa)). The segment covering 343–354 (PSGTRTNGQVGT) has biased composition (polar residues).

It belongs to the CCDC149 family.

The polypeptide is Coiled-coil domain-containing protein 149-A (ccdc149a) (Danio rerio (Zebrafish)).